The sequence spans 226 residues: Purine nucleoside phosphorylase Cj1217c (226 aa).

Zn(2+) contacts are provided by His58, Cys93, and His109.

The protein belongs to the purine nucleoside phosphorylase YfiH/LACC1 family. As to quaternary structure, homodimer. It depends on Cu(2+) as a cofactor. Requires Zn(2+) as cofactor.

The catalysed reaction is adenosine + phosphate = alpha-D-ribose 1-phosphate + adenine. It catalyses the reaction S-methyl-5'-thioadenosine + phosphate = 5-(methylsulfanyl)-alpha-D-ribose 1-phosphate + adenine. The enzyme catalyses inosine + phosphate = alpha-D-ribose 1-phosphate + hypoxanthine. It carries out the reaction adenosine + H2O + H(+) = inosine + NH4(+). Purine nucleoside enzyme that catalyzes the phosphorolysis of adenosine and inosine nucleosides, yielding D-ribose 1-phosphate and the respective free bases, adenine and hypoxanthine. Also catalyzes the phosphorolysis of S-methyl-5'-thioadenosine into adenine and S-methyl-5-thio-alpha-D-ribose 1-phosphate. Also has adenosine deaminase activity. In Campylobacter jejuni subsp. jejuni serotype O:2 (strain ATCC 700819 / NCTC 11168), this protein is Purine nucleoside phosphorylase Cj1217c.